We begin with the raw amino-acid sequence, 168 residues long: Putative apoptosis regulator A9 (168 aa).

The chain crosses the membrane as a helical span at residues 143–162 (SAFYFLTAAASCLTLLLLYF).

The protein resides in the host membrane. Its function is as follows. Suppresses apoptosis in host cell and thus facilitates production of progeny virions. This is Putative apoptosis regulator A9 (A9) from Alcelaphine herpesvirus 1 (strain C500) (AlHV-1).